A 253-amino-acid chain; its full sequence is MKITAIIPARYASTRFEGKALAQIQGKPMVQHVYERTLKASLVSEVIVATDDERIVAAVRAFGGRAEMTSRSHETGTDRLAEVAARLDSDIIVNVQGDEPLIDPAMIDEAISPLAEDSSLLMGTLKTRIKSLHDFLSPNVVKVVTDWEGYALYFSRSPLPNFRDKWNDLKDEAFSSRKLLCFKHVGLYVYRREFLLQFAQMSPTYLEMAEKLEQLRVLENGYRIKVVETDFESIGVDTPGDLDKVLERLKDRG.

It belongs to the KdsB family.

The protein localises to the cytoplasm. The catalysed reaction is 3-deoxy-alpha-D-manno-oct-2-ulosonate + CTP = CMP-3-deoxy-beta-D-manno-octulosonate + diphosphate. The protein operates within nucleotide-sugar biosynthesis; CMP-3-deoxy-D-manno-octulosonate biosynthesis; CMP-3-deoxy-D-manno-octulosonate from 3-deoxy-D-manno-octulosonate and CTP: step 1/1. Its pathway is bacterial outer membrane biogenesis; lipopolysaccharide biosynthesis. Activates KDO (a required 8-carbon sugar) for incorporation into bacterial lipopolysaccharide in Gram-negative bacteria. The protein is 3-deoxy-manno-octulosonate cytidylyltransferase of Geotalea daltonii (strain DSM 22248 / JCM 15807 / FRC-32) (Geobacter daltonii).